The chain runs to 434 residues: Glutamyl-tRNA reductase (434 aa).

Residues 49–52 (TCNR), Ser-114, 119–121 (EPQ), and Gln-125 each bind substrate. Cys-50 acts as the Nucleophile in catalysis. 199–204 (GAGETI) contributes to the NADP(+) binding site.

It belongs to the glutamyl-tRNA reductase family. Homodimer.

The catalysed reaction is (S)-4-amino-5-oxopentanoate + tRNA(Glu) + NADP(+) = L-glutamyl-tRNA(Glu) + NADPH + H(+). It functions in the pathway porphyrin-containing compound metabolism; protoporphyrin-IX biosynthesis; 5-aminolevulinate from L-glutamyl-tRNA(Glu): step 1/2. Catalyzes the NADPH-dependent reduction of glutamyl-tRNA(Glu) to glutamate 1-semialdehyde (GSA). The protein is Glutamyl-tRNA reductase of Pasteurella multocida (strain Pm70).